Reading from the N-terminus, the 1124-residue chain is Transient-receptor-potential-like protein (1124 aa).

Residues 1 to 24 (MGRKKKLPTGVSSGVSHASSAPKS) are disordered. At 1-340 (MGRKKKLPTG…GFRRKSIVDK (340 aa)) the chain is on the cytoplasmic side. A compositionally biased stretch (low complexity) spans 10 to 21 (GVSSGVSHASSA). ANK repeat units lie at residues 40-69 (LEEK…RHQH), 78-107 (LGRR…ETKD), and 152-181 (PDIT…AVPV). A helical membrane pass occupies residues 341-361 (VICIAQVAVLFPLYCLIYMCA). Residues 362–373 (PNCRTGQLMRKP) lie on the Extracellular side of the membrane. Residues 374-394 (FMKFLIHASSYLFFLFILILV) traverse the membrane as a helical segment. The Cytoplasmic segment spans residues 395–431 (SQRADDDFVRIFGTTRMKKELAEQELRQRGQTPSKLE). The chain crosses the membrane as a helical span at residues 432–452 (LIVVMYVIGFVWEEVQEIFAV). Residues 453–512 (GMKSYLRNMWNFIDFLRNSLYVSVMCLRAFAYIQQATEIARDPQMAYIPREKWHDFDPQL) are Extracellular-facing. Residues 513-533 (IAEGLFAAANVFSALKLVHLF) traverse the membrane as a helical segment. Topologically, residues 534–548 (SINPHLGPLQISLGR) are cytoplasmic. A helical transmembrane segment spans residues 549 to 569 (MVIDIVKFFFIYTLVLFAFAC). The Extracellular segment spans residues 570 to 645 (GLNQLLWYFA…GIKSYTRFWG (76 aa)). Residues 646 to 666 (LLMFGSYSVINVIVLLNLLIA) traverse the membrane as a helical segment. Over 667-1124 (MMSNSYAMID…TSPQRPKHRN (458 aa)) the chain is Cytoplasmic. 2 calmodulin-binding regions span residues 710 to 728 (SVKW…IDRQ) and 853 to 895 (IPSK…SQIG). 2 disordered regions span residues 978–1013 (RAMA…GVSH) and 1031–1124 (LIAN…KHRN). The span at 1035 to 1063 (SAPSAPTAPPKKSAPTAPTPTYKPTTHAP) shows a compositional bias: low complexity. Composition is skewed to basic and acidic residues over residues 1069–1081 (GNRE…DGVR) and 1090–1106 (HVVD…RDNV). Positions 1107–1118 (SDISSIASTSPQ) are enriched in polar residues.

It belongs to the transient receptor (TC 1.A.4) family. STrpC subfamily. As to quaternary structure, forms heteromultimers with Trpgamma and, to a lower extent, with trp. Interacts with Fkbp59 in vivo and is found in the inaD signaling complex. As to expression, expressed predominantly in the rhabdomeres of photoreceptor cells.

It localises to the membrane. The protein resides in the cell projection. It is found in the rhabdomere membrane. Functionally, a light-sensitive calcium channel that is required for inositide-mediated Ca(2+) entry in the retina during phospholipase C (PLC)-mediated phototransduction. Required for vision in the dark and in dim light. Binds calmodulin. Trp and trpl act together in the light response, although it is unclear whether as heteromultimers or distinct units. Also forms a functional cation channel with Trpgamma. Activated by fatty acids, metabolic stress, inositols and GTP-binding proteins. The sequence is that of Transient-receptor-potential-like protein (trpl) from Drosophila melanogaster (Fruit fly).